The sequence spans 392 residues: Phosphopentomutase (392 aa).

Mn(2+) contacts are provided by aspartate 13, aspartate 286, histidine 291, aspartate 327, histidine 328, and histidine 339.

It belongs to the phosphopentomutase family. The cofactor is Mn(2+).

The protein localises to the cytoplasm. The enzyme catalyses 2-deoxy-alpha-D-ribose 1-phosphate = 2-deoxy-D-ribose 5-phosphate. It catalyses the reaction alpha-D-ribose 1-phosphate = D-ribose 5-phosphate. It participates in carbohydrate degradation; 2-deoxy-D-ribose 1-phosphate degradation; D-glyceraldehyde 3-phosphate and acetaldehyde from 2-deoxy-alpha-D-ribose 1-phosphate: step 1/2. In terms of biological role, isomerase that catalyzes the conversion of deoxy-ribose 1-phosphate (dRib-1-P) and ribose 1-phosphate (Rib-1-P) to deoxy-ribose 5-phosphate (dRib-5-P) and ribose 5-phosphate (Rib-5-P), respectively. The protein is Phosphopentomutase of Oceanobacillus iheyensis (strain DSM 14371 / CIP 107618 / JCM 11309 / KCTC 3954 / HTE831).